We begin with the raw amino-acid sequence, 554 residues long: Suppressor of hairless homolog (554 aa).

The interval 1–31 (MYHPHHLPAHGQVQSHQHREDAAATSSRDVN) is disordered. DNA-binding regions lie at residues 83 to 90 (KSYGNEKR), 218 to 227 (RLRSQTVSTR), and 291 to 323 (RKVD…ERMY). Residues 381–471 (PNVHSLQLNG…YPTNLTFTFT (91 aa)) enclose the IPT/TIG domain. The tract at residues 489 to 554 (GSKRPSASMP…NGANMLRTAS (66 aa)) is disordered. Residues 508–519 (DSGRGNESDRGD) are compositionally biased toward basic and acidic residues.

Belongs to the Su(H) family. In terms of assembly, interacts with activated Notch proteins.

Its subcellular location is the nucleus. In terms of biological role, transcriptional regulator that plays a central role in Notch signaling, a signaling pathway involved in cell-cell communication that regulates a broad spectrum of cell-fate determinations. Acts as a transcriptional repressor when it is not associated with Notch proteins. When associated with some Notch protein, it acts as a transcriptional activator that activates transcription of Notch target genes. Required for the transcriptional expression of Brachyury, suggesting that it participates in notochord differentiation. This chain is Suppressor of hairless homolog (Su(H)), found in Ciona intestinalis (Transparent sea squirt).